A 396-amino-acid chain; its full sequence is CCA-adding enzyme (396 aa).

2 residues coordinate ATP: Gly27 and Arg30. The CTP site is built by Gly27 and Arg30. Positions 40 and 42 each coordinate Mg(2+). ATP contacts are provided by Arg111, Asp154, Arg157, Arg160, and Arg163. Positions 111, 154, 157, 160, and 163 each coordinate CTP.

This sequence belongs to the tRNA nucleotidyltransferase/poly(A) polymerase family. Bacterial CCA-adding enzyme type 3 subfamily. Homodimer. Mg(2+) is required as a cofactor.

The catalysed reaction is a tRNA precursor + 2 CTP + ATP = a tRNA with a 3' CCA end + 3 diphosphate. It carries out the reaction a tRNA with a 3' CCA end + 2 CTP + ATP = a tRNA with a 3' CCACCA end + 3 diphosphate. In terms of biological role, catalyzes the addition and repair of the essential 3'-terminal CCA sequence in tRNAs without using a nucleic acid template. Adds these three nucleotides in the order of C, C, and A to the tRNA nucleotide-73, using CTP and ATP as substrates and producing inorganic pyrophosphate. tRNA 3'-terminal CCA addition is required both for tRNA processing and repair. Also involved in tRNA surveillance by mediating tandem CCA addition to generate a CCACCA at the 3' terminus of unstable tRNAs. While stable tRNAs receive only 3'-terminal CCA, unstable tRNAs are marked with CCACCA and rapidly degraded. This Bacillus velezensis (strain DSM 23117 / BGSC 10A6 / LMG 26770 / FZB42) (Bacillus amyloliquefaciens subsp. plantarum) protein is CCA-adding enzyme.